A 194-amino-acid chain; its full sequence is Cysteine and glycine-rich protein 3 (194 aa).

The interaction with TCAP stretch occupies residues 1–5; that stretch reads MPNWG. Positions 10 to 61 constitute an LIM zinc-binding 1 domain; sequence CGACDKTVYHAEEIQCNGRSFHKTCFHCMACRKALDSTTVAAHESEIYCKVC. Residues 64–69 carry the Nuclear localization signal motif; it reads RKYGPK. The interval 94-105 is interaction with CLF2; sequence QSPKPARAATTS. 3 positions are modified to phosphoserine: S95, S111, and S153. One can recognise an LIM zinc-binding 2 domain in the interval 120 to 171; sequence CPRCGKSVYAAEKVMGGGKPWHKTCFPCAICGKSLESTNVTDKDGELYCKVC.

Self-associates. Oligomeric in the cytoplasm and monomeric in the nucleus. Homooligomers preferentially form along the actin cytoskeleton. Interacts with TCAP, ACTN2 and NRAP. Interacts with LDHD, SPTB, MYOD1, MYOG, MYF6. Interacts with GLRX3 (via C-terminus); GLRX3 and calcineurin compete for interaction with CSRP3. Interacts with CFL2; the stoichiometry influences F-actin depolymerization and possibly two molecules of CFL2 can interact with one molecule of CSRP3 resulting in the highest functional impact; the interaction is stronger with phosphorylated CFL2. In terms of processing, phosphorylated by PKC/PRKCA. In terms of tissue distribution, high in striated muscle and adult heart.

The protein localises to the nucleus. It is found in the cytoplasm. It localises to the cytoskeleton. The protein resides in the myofibril. Its subcellular location is the sarcomere. The protein localises to the z line. Its function is as follows. Positive regulator of myogenesis. Acts as a cofactor for myogenic bHLH transcription factors such as MYOD1, and probably MYOG and MYF6. Enhances the DNA-binding activity of the MYOD1:TCF3 isoform E47 complex and may promote formation of a functional MYOD1:TCF3 isoform E47:MEF2A complex involved in myogenesis. Plays a crucial and specific role in the organization of cytosolic structures in cardiomyocytes. Could play a role in mechanical stretch sensing. May be a scaffold protein that promotes the assembly of interacting proteins at Z-line structures. It is essential for calcineurin anchorage to the Z line. Required for stress-induced calcineurin-NFAT activation. The role in regulation of cytoskeleton dynamics by association with CFL2 is reported conflictingly. Proposed to contribute to the maintenance of muscle cell integrity through an actin-based mechanism. Can directly bind to actin filaments, cross-link actin filaments into bundles without polarity selectivity and protect them from dilution- and cofilin-mediated depolymerization; the function seems to involve its self-association. In vitro can inhibit PKC/PRKCA activity. Proposed to be involved in cardiac stress signaling by down-regulating excessive PKC/PRKCA signaling. This Rattus norvegicus (Rat) protein is Cysteine and glycine-rich protein 3 (Csrp3).